The chain runs to 579 residues: V-type ATP synthase alpha chain (579 aa).

227 to 234 serves as a coordination point for ATP; the sequence is GGFGTGKT.

It belongs to the ATPase alpha/beta chains family.

It catalyses the reaction ATP + H2O + 4 H(+)(in) = ADP + phosphate + 5 H(+)(out). Functionally, produces ATP from ADP in the presence of a proton gradient across the membrane. The V-type alpha chain is a catalytic subunit. In Anaeromyxobacter dehalogenans (strain 2CP-C), this protein is V-type ATP synthase alpha chain.